A 425-amino-acid chain; its full sequence is Inner membrane protein YqcE (425 aa).

Residues 1-8 lie on the Cytoplasmic side of the membrane; sequence MQHNSYRR. A helical transmembrane segment spans residues 9–29; that stretch reads WITLAIISFSGGVSFDLAYLR. Over 30 to 48 the chain is Periplasmic; the sequence is YIYQIPMAKFMGFSNTEIG. A helical membrane pass occupies residues 49–69; the sequence is LIMSTFGIAAIILYAPSGVIA. Residues 70–75 lie on the Cytoplasmic side of the membrane; that stretch reads DKFSHR. The next 2 helical transmembrane spans lie at 76–96 and 97–117; these read KMIT…ATYP and PLWV…LMLW. Over 118–138 the chain is Cytoplasmic; sequence SVSIKAASLLGDHSEQGKIMG. The helical transmembrane segment at 139–159 threads the bilayer; sequence WMEGLRGVGVMSLAVFTMWVF. At 160–171 the chain is on the periplasmic side; sequence SRFAPDDSTSLK. A helical membrane pass occupies residues 172-192; sequence TVIIIYSVVYILLGILCWFFV. The Cytoplasmic portion of the chain corresponds to 193–219; it reads SDNNNLRSANNEEKQSFQLSDILAVLR. A helical membrane pass occupies residues 220–240; it reads ISTTWYCSMVIFGVFTIYAIL. Topologically, residues 241–259 are periplasmic; the sequence is SYSTNYLTEMYGMSLVAAS. Residues 260–280 form a helical membrane-spanning segment; the sequence is YMGIVINKIFRALCGPLGGII. Topologically, residues 281-291 are cytoplasmic; sequence TTYSKVKSPTR. A helical membrane pass occupies residues 292–312; sequence VIQILSVLGLLTLTALLVTNS. A topological domain (periplasmic) is located at residue asparagine 313. Residues 314-334 form a helical membrane-spanning segment; it reads PQSVAMGIGLILLLGFTCYAS. The Cytoplasmic segment spans residues 335-354; it reads RGLYWACPGEARTPSYIMGT. A helical membrane pass occupies residues 355–375; it reads TVGICSVIGFLPDVFVYPIIG. Topologically, residues 376 to 388 are periplasmic; it reads HWQDTLPAAEAYR. A helical transmembrane segment spans residues 389–409; the sequence is NMWLMGMAALGMVIVFTFLLF. Over 410 to 425 the chain is Cytoplasmic; sequence QKIRTADSAPAMASSK.

The protein to E.coli YihN.

Its subcellular location is the cell inner membrane. The sequence is that of Inner membrane protein YqcE (yqcE) from Escherichia coli (strain K12).